We begin with the raw amino-acid sequence, 209 residues long: Probable peptide export ATP-binding protein YydI (209 aa).

In terms of domain architecture, ABC transporter spans 1 to 207 (MNIANYTLKV…SVDKLIEVYI (207 aa)). 33–40 (GKNGVGKS) contributes to the ATP binding site.

The protein belongs to the ABC transporter superfamily. As to quaternary structure, the complex is composed of two ATP-binding proteins (YydI), two transmembrane proteins (YydJ).

Its function is as follows. Suggested to be part of an ABC transporter complex YydIJ involved in export of the modified peptide YydF. Responsible for energy coupling to the transport system. The chain is Probable peptide export ATP-binding protein YydI (yydI) from Bacillus subtilis (strain 168).